The following is a 655-amino-acid chain: Protein npp-24 (655 aa).

A helical transmembrane segment spans residues 263–283; it reads ICSVFVLVSGGGVLSHLVVFP.

It localises to the membrane. In Caenorhabditis elegans, this protein is Protein npp-24.